The primary structure comprises 932 residues: Protocadherin gamma-A9 (932 aa).

Positions 1-28 (MAAPTKCQLRGRLVLLCSLLGMLWEARA) are cleaved as a signal peptide. 6 consecutive Cadherin domains span residues 29–133 (SQIR…APKF), 134–242 (QAES…APVF), 243–347 (AQRI…RPEV), 348–452 (TITS…PPAF), 453–562 (SQAS…APEI), and 570–683 (DGST…IPAD). At 29 to 692 (SQIRYSVPEE…DLEASDLTLY (664 aa)) the chain is on the extracellular side. Residues asparagine 47 and asparagine 127 are each glycosylated (N-linked (GlcNAc...) asparagine). Residues asparagine 389, asparagine 419, and asparagine 545 are each glycosylated (N-linked (GlcNAc...) asparagine). A helical membrane pass occupies residues 693–713 (LVVAVAVVSCVFLTFVITLLA). At 714–932 (LRLRHWHSSH…KKKSGKKEKK (219 aa)) the chain is on the cytoplasmic side. Disordered regions lie at residues 803–841 (DTPL…WPNN) and 902–932 (ATLT…KEKK). Residues 816–841 (WRFSQAQRPGTSGSQNGDDTGTWPNN) show a composition bias toward polar residues. Residues 922-932 (NKKKSGKKEKK) show a composition bias toward basic residues.

It localises to the cell membrane. Potential calcium-dependent cell-adhesion protein. May be involved in the establishment and maintenance of specific neuronal connections in the brain. The sequence is that of Protocadherin gamma-A9 (PCDHGA9) from Pan troglodytes (Chimpanzee).